The primary structure comprises 289 residues: Glycine--tRNA ligase alpha subunit (289 aa).

The protein belongs to the class-II aminoacyl-tRNA synthetase family. In terms of assembly, tetramer of two alpha and two beta subunits.

The protein resides in the cytoplasm. It catalyses the reaction tRNA(Gly) + glycine + ATP = glycyl-tRNA(Gly) + AMP + diphosphate. This chain is Glycine--tRNA ligase alpha subunit, found in Rickettsia typhi (strain ATCC VR-144 / Wilmington).